The chain runs to 208 residues: dTTP/UTP pyrophosphatase (208 aa).

Catalysis depends on aspartate 79, which acts as the Proton acceptor.

This sequence belongs to the Maf family. YhdE subfamily. A divalent metal cation is required as a cofactor.

It localises to the cytoplasm. The enzyme catalyses dTTP + H2O = dTMP + diphosphate + H(+). It carries out the reaction UTP + H2O = UMP + diphosphate + H(+). Its function is as follows. Nucleoside triphosphate pyrophosphatase that hydrolyzes dTTP and UTP. May have a dual role in cell division arrest and in preventing the incorporation of modified nucleotides into cellular nucleic acids. This Mesorhizobium japonicum (strain LMG 29417 / CECT 9101 / MAFF 303099) (Mesorhizobium loti (strain MAFF 303099)) protein is dTTP/UTP pyrophosphatase.